Here is a 256-residue protein sequence, read N- to C-terminus: Small ribosomal subunit protein eS1 (256 aa).

An N-acetylalanine; partial modification is found at Ala-2.

The protein belongs to the eukaryotic ribosomal protein eS1 family. In terms of assembly, component of the small ribosomal subunit. Mature ribosomes consist of a small (40S) and a large (60S) subunit. The 40S subunit contains about 33 different proteins and 1 molecule of RNA (18S). The 60S subunit contains about 49 different proteins and 3 molecules of RNA (25S, 5.8S and 5S).

The protein resides in the cytoplasm. This chain is Small ribosomal subunit protein eS1, found in Postia placenta (strain ATCC 44394 / Madison 698-R) (Brown rot fungus).